A 361-amino-acid chain; its full sequence is tRNA-specific 2-thiouridylase MnmA (361 aa).

ATP contacts are provided by residues 8–15 and M34; that span reads GMSGGVDS. The segment at 94 to 96 is interaction with target base in tRNA; that stretch reads NPD. C99 functions as the Nucleophile in the catalytic mechanism. C99 and C195 are disulfide-bonded. Position 123 (G123) interacts with ATP. Residues 145 to 147 form an interaction with tRNA region; that stretch reads KDQ. C195 acts as the Cysteine persulfide intermediate in catalysis. An interaction with tRNA region spans residues 307–308; sequence RY.

Belongs to the MnmA/TRMU family.

It is found in the cytoplasm. The catalysed reaction is S-sulfanyl-L-cysteinyl-[protein] + uridine(34) in tRNA + AH2 + ATP = 2-thiouridine(34) in tRNA + L-cysteinyl-[protein] + A + AMP + diphosphate + H(+). Catalyzes the 2-thiolation of uridine at the wobble position (U34) of tRNA, leading to the formation of s(2)U34. This is tRNA-specific 2-thiouridylase MnmA from Legionella pneumophila (strain Paris).